The sequence spans 182 residues: Transcriptional repressor NrdR (182 aa).

The tract at residues 1–24 (MRCPYCGGLDTQVRDSRPTEDNTA) is disordered. A zinc finger spans residues 3–34 (CPYCGGLDTQVRDSRPTEDNTAIRRRRICPDC). Residues 12–24 (QVRDSRPTEDNTA) are compositionally biased toward basic and acidic residues. One can recognise an ATP-cone domain in the interval 49 to 139 (LMVLKRSGRR…VYRNFREAKD (91 aa)). Residues 146–182 (ELSQPELAQSDDVKAEGGAEGGRDKPKAAGKPPRSAE) are disordered. Positions 156–172 (DDVKAEGGAEGGRDKPK) are enriched in basic and acidic residues.

The protein belongs to the NrdR family. Zn(2+) is required as a cofactor.

In terms of biological role, negatively regulates transcription of bacterial ribonucleotide reductase nrd genes and operons by binding to NrdR-boxes. The polypeptide is Transcriptional repressor NrdR (Xanthobacter autotrophicus (strain ATCC BAA-1158 / Py2)).